Here is a 254-residue protein sequence, read N- to C-terminus: Protein GVQW3 (254 aa).

The polypeptide is Protein GVQW3 (Homo sapiens (Human)).